A 447-amino-acid polypeptide reads, in one-letter code: UDP-glycosyltransferase 76E5 (447 aa).

UDP-alpha-D-glucose-binding positions include Ser272, 324-326 (APQ), 341-349 (HCGWNSTLE), and 363-366 (NGEQ).

The protein belongs to the UDP-glycosyltransferase family.

The polypeptide is UDP-glycosyltransferase 76E5 (UGT76E5) (Arabidopsis thaliana (Mouse-ear cress)).